The following is a 1610-amino-acid chain: Adenylate cyclase type 10 (1610 aa).

2 consecutive Guanylate cyclase domains span residues 42–179 (VLMF…RLAQ) and 293–418 (TIVF…ARMM). D47 and I48 together coordinate Mg(2+). Residue 47–52 (DISGFT) coordinates ATP. Position 95 (K95) interacts with hydrogencarbonate. D99 lines the Mg(2+) pocket. ATP is bound by residues D99 and K144. Residues V167, R176, and M337 each contribute to the hydrogencarbonate site. Residues V406 and 412–416 (NLAAR) each bind ATP.

Belongs to the adenylyl cyclase class-4/guanylyl cyclase family. Mg(2+) serves as cofactor. It depends on Mn(2+) as a cofactor. Cleavage may occur to generate the active 48 kDa form. As to expression, detected in airway epithelial cells and testis (at protein level). Weakly expressed in multiple tissues. Expressed in brain, heart, kidney, liver, lung, pancreas, peripheral blood leukocytes, placenta, skeletal muscle, stomach, thymus, airway epithelial cells, duodenum, jejunum and ileum. Very low level of expression in bone.

It localises to the cell membrane. Its subcellular location is the cytoplasm. The protein localises to the cytoskeleton. It is found in the perinuclear region. The protein resides in the nucleus. It localises to the cell projection. Its subcellular location is the cilium. The protein localises to the mitochondrion. It carries out the reaction ATP = 3',5'-cyclic AMP + diphosphate. Activated by manganese or magnesium ions. In the presence of magnesium ions, the enzyme is activated by bicarbonate. In the presence of manganese ions, the enzyme is inhibited by bicarbonate. In the absence of magnesium and bicarbonate, the enzyme is weakly activated by calcium. Calcium mildly increases the enzyme activity, also in the presence of magnesium ions. Its function is as follows. Catalyzes the formation of the signaling molecule cAMP. May function as sensor that mediates responses to changes in cellular bicarbonate and CO(2) levels. Has a critical role in mammalian spermatogenesis by producing the cAMP which regulates cAMP-responsive nuclear factors indispensable for sperm maturation in the epididymis. Induces capacitation, the maturational process that sperm undergo prior to fertilization. Involved in ciliary beat regulation. The protein is Adenylate cyclase type 10 (ADCY10) of Homo sapiens (Human).